Here is a 145-residue protein sequence, read N- to C-terminus: UPF0735 ACT domain-containing protein CPR_1404 (145 aa).

An ACT domain is found at 69 to 144 (IFNMVVTHEK…GVEKVEFVAM (76 aa)).

The protein belongs to the UPF0735 family.

This chain is UPF0735 ACT domain-containing protein CPR_1404, found in Clostridium perfringens (strain SM101 / Type A).